Consider the following 265-residue polypeptide: MSCIKNSFEALKAKNEKALVGFVTAGDPDFGKSVEIVKAMCEGGMDVLELGIPFSDPTADGPVIQRSSQRALSSGMSLPKVLEMVKIVRGFTKIPIVLFGYYNPIFSYGGKRFYEDALAAGADGVLIVDLPPEESAELTSLWEGDDFDFIRLVAPTTGQDRMKQIAGEASGFIYLVSMTGVTGSQGLDSSKVADVNAPLKAVTDLPVCVGFGISTPEHVKAVAAVSDGVVVGSAFERLIEENLENRGLHTMVQEYTESLKAATRG.

Active-site proton acceptor residues include Glu49 and Asp60.

Belongs to the TrpA family. In terms of assembly, tetramer of two alpha and two beta chains.

It carries out the reaction (1S,2R)-1-C-(indol-3-yl)glycerol 3-phosphate + L-serine = D-glyceraldehyde 3-phosphate + L-tryptophan + H2O. It functions in the pathway amino-acid biosynthesis; L-tryptophan biosynthesis; L-tryptophan from chorismate: step 5/5. In terms of biological role, the alpha subunit is responsible for the aldol cleavage of indoleglycerol phosphate to indole and glyceraldehyde 3-phosphate. This chain is Tryptophan synthase alpha chain, found in Desulfatibacillum aliphaticivorans.